A 227-amino-acid polypeptide reads, in one-letter code: Ribose-5-phosphate isomerase A (227 aa).

Substrate contacts are provided by residues 28 to 31 (TGST), 84 to 87 (DGAD), and 97 to 100 (KGGG). The active-site Proton acceptor is the glutamate 106. Lysine 124 lines the substrate pocket.

This sequence belongs to the ribose 5-phosphate isomerase family. As to quaternary structure, homodimer.

The catalysed reaction is aldehydo-D-ribose 5-phosphate = D-ribulose 5-phosphate. It functions in the pathway carbohydrate degradation; pentose phosphate pathway; D-ribose 5-phosphate from D-ribulose 5-phosphate (non-oxidative stage): step 1/1. Catalyzes the reversible conversion of ribose-5-phosphate to ribulose 5-phosphate. The protein is Ribose-5-phosphate isomerase A of Lactiplantibacillus plantarum (strain ATCC BAA-793 / NCIMB 8826 / WCFS1) (Lactobacillus plantarum).